We begin with the raw amino-acid sequence, 513 residues long: ATP synthase subunit alpha (513 aa).

169–176 (GDRQTGKT) serves as a coordination point for ATP.

Belongs to the ATPase alpha/beta chains family. F-type ATPases have 2 components, CF(1) - the catalytic core - and CF(0) - the membrane proton channel. CF(1) has five subunits: alpha(3), beta(3), gamma(1), delta(1), epsilon(1). CF(0) has three main subunits: a(1), b(2) and c(9-12). The alpha and beta chains form an alternating ring which encloses part of the gamma chain. CF(1) is attached to CF(0) by a central stalk formed by the gamma and epsilon chains, while a peripheral stalk is formed by the delta and b chains.

Its subcellular location is the cell inner membrane. It carries out the reaction ATP + H2O + 4 H(+)(in) = ADP + phosphate + 5 H(+)(out). Produces ATP from ADP in the presence of a proton gradient across the membrane. The alpha chain is a regulatory subunit. The polypeptide is ATP synthase subunit alpha (Proteus mirabilis (strain HI4320)).